The sequence spans 316 residues: Probable cell division protein WhiA (316 aa).

The segment at residues Thr-275–Ser-309 is a DNA-binding region (H-T-H motif).

Belongs to the WhiA family.

Functionally, involved in cell division and chromosome segregation. The sequence is that of Probable cell division protein WhiA from Bacillus licheniformis (strain ATCC 14580 / DSM 13 / JCM 2505 / CCUG 7422 / NBRC 12200 / NCIMB 9375 / NCTC 10341 / NRRL NRS-1264 / Gibson 46).